We begin with the raw amino-acid sequence, 196 residues long: Glycerol-3-phosphate acyltransferase (196 aa).

4 helical membrane-spanning segments follow: residues 4 to 24 (IYIAALVLGYLFGSIPFGLIL), 70 to 90 (VLIAAGFGGAEAAMLAALGAF), 111 to 131 (IGVLLGLFWPAALVFCVLWLA), and 152 to 172 (IFLWWFGHPTMASLFAVLTLL).

This sequence belongs to the PlsY family. In terms of assembly, probably interacts with PlsX.

The protein localises to the cell inner membrane. The enzyme catalyses an acyl phosphate + sn-glycerol 3-phosphate = a 1-acyl-sn-glycero-3-phosphate + phosphate. It participates in lipid metabolism; phospholipid metabolism. Its function is as follows. Catalyzes the transfer of an acyl group from acyl-phosphate (acyl-PO(4)) to glycerol-3-phosphate (G3P) to form lysophosphatidic acid (LPA). This enzyme utilizes acyl-phosphate as fatty acyl donor, but not acyl-CoA or acyl-ACP. In Rhodopseudomonas palustris (strain BisB5), this protein is Glycerol-3-phosphate acyltransferase.